We begin with the raw amino-acid sequence, 498 residues long: Putative BTB/POZ domain-containing protein L67 (498 aa).

In terms of domain architecture, BTB spans 26 to 96; the sequence is SDINITLSDN…MYGISLSEIN (71 aa).

Belongs to the mimivirus BTB/WD family.

This chain is Putative BTB/POZ domain-containing protein L67, found in Acanthamoeba polyphaga (Amoeba).